Here is a 790-residue protein sequence, read N- to C-terminus: Penicillin-binding protein 1A (790 aa).

The Cytoplasmic portion of the chain corresponds to 1–20; the sequence is MANVRKRRKKKNEHKALRLT. Residues 21–41 traverse the membrane as a helical; Signal-anchor for type II membrane protein segment; that stretch reads FITLLMVFLFSCVAAAGVGLA. Over 42-790 the chain is Extracellular; the sequence is MIKAAPPLDV…RKRKMIKPQI (749 aa). Residues 61–230 form a transglycosylase region; sequence SVIYDDKNKL…PQSPSTFYNA (170 aa). The active-site Proton donor; for transglycosylase activity is the E100. Residues 363–656 form a transpeptidase region; it reads ASVSIVDYKT…AALIWKLIMG (294 aa). S402 acts as the Acyl-ester intermediate; for transpeptidase activity in catalysis. Residues 720 to 790 are disordered; sequence NKDKDDDDDD…RKRKMIKPQI (71 aa). Positions 724-740 are enriched in acidic residues; sequence DDDDDDKDKDKEDEEEN. Residues 741–779 are compositionally biased toward basic and acidic residues; the sequence is KDEKNEDKKEAKDNTKNKDKDKKKDNDRKIDMDKKPDSS. Positions 780-790 are enriched in basic residues; the sequence is KRKRKMIKPQI.

The protein in the N-terminal section; belongs to the glycosyltransferase 51 family. In the C-terminal section; belongs to the transpeptidase family.

It is found in the cell membrane. The enzyme catalyses [GlcNAc-(1-&gt;4)-Mur2Ac(oyl-L-Ala-gamma-D-Glu-L-Lys-D-Ala-D-Ala)](n)-di-trans,octa-cis-undecaprenyl diphosphate + beta-D-GlcNAc-(1-&gt;4)-Mur2Ac(oyl-L-Ala-gamma-D-Glu-L-Lys-D-Ala-D-Ala)-di-trans,octa-cis-undecaprenyl diphosphate = [GlcNAc-(1-&gt;4)-Mur2Ac(oyl-L-Ala-gamma-D-Glu-L-Lys-D-Ala-D-Ala)](n+1)-di-trans,octa-cis-undecaprenyl diphosphate + di-trans,octa-cis-undecaprenyl diphosphate + H(+). It carries out the reaction Preferential cleavage: (Ac)2-L-Lys-D-Ala-|-D-Ala. Also transpeptidation of peptidyl-alanyl moieties that are N-acyl substituents of D-alanine.. Its pathway is cell wall biogenesis; peptidoglycan biosynthesis. Its function is as follows. Cell wall formation. Synthesis of cross-linked peptidoglycan from the lipid intermediates. The enzyme has a penicillin-insensitive transglycosylase N-terminal domain (formation of linear glycan strands) and a penicillin-sensitive transpeptidase C-terminal domain (cross-linking of the peptide subunits). This chain is Penicillin-binding protein 1A (pbpA), found in Clostridium tetani (strain Massachusetts / E88).